We begin with the raw amino-acid sequence, 38 residues long: Potassium channel toxin alpha-KTx 2.3 (38 aa).

3 disulfides stabilise this stretch: Cys7/Cys29, Cys13/Cys34, and Cys17/Cys36.

Belongs to the short scorpion toxin superfamily. Potassium channel inhibitor family. Alpha-KTx 02 subfamily. As to expression, expressed by the venom gland.

The protein resides in the secreted. Inhibitor of voltage-gated potassium channels (Kv). It is capable of displacing the binding of radio-labeled noxiustoxin (AC P08815) to rat brain synaptosomes with high affinity (about 100 pM). It is also capable of inhibiting transient potassium-currents (resembling I(A)-type currents), in cultured rat cerebellar granule cells. About 50% of the peak currents are reduced by application of a 1.5 uM solution of this toxin. The protein is Potassium channel toxin alpha-KTx 2.3 of Centruroides limpidus (Mexican scorpion).